Here is a 37-residue protein sequence, read N- to C-terminus: Large ribosomal subunit protein bL36 (37 aa).

The protein belongs to the bacterial ribosomal protein bL36 family.

The chain is Large ribosomal subunit protein bL36 from Beutenbergia cavernae (strain ATCC BAA-8 / DSM 12333 / CCUG 43141 / JCM 11478 / NBRC 16432 / NCIMB 13614 / HKI 0122).